The sequence spans 309 residues: Metaxin-3 (309 aa).

The interval 274 to 309 (MDDNLRRSPQNRPQKLSTLKPVGGAENSHSSDLLSH) is disordered. Polar residues-rich tracts occupy residues 280–290 (RSPQNRPQKLS) and 300–309 (NSHSSDLLSH).

This sequence belongs to the metaxin family. In terms of assembly, part of a large protein complex spanning both mitochondrial membranes termed the mitochondrial intermembrane space bridging (MIB) complex.

It localises to the mitochondrion. Its subcellular location is the mitochondrion outer membrane. In terms of biological role, could function in transport of proteins into the mitochondrion. The protein is Metaxin-3 (mtx3) of Xenopus laevis (African clawed frog).